A 2206-amino-acid chain; its full sequence is Genome polyprotein (2206 aa).

A lipid anchor (N-myristoyl glycine; by host) is attached at G2. Topologically, residues 2–1517 (GAQVSSQKVG…NINRAMTILQ (1516 aa)) are cytoplasmic. Amphipathic alpha-helix regions lie at residues 579 to 599 (GIED…LPKQ) and 579 to 603 (GIED…QDSL). Active-site for protease 2A activity residues include H898 and D916. C933 and C935 together coordinate Zn(2+). Residue C987 is the For protease 2A activity of the active site. 2 residues coordinate Zn(2+): C993 and H995. The segment at 1125–1197 (GDSWLKKFTE…HQSCPSQEHQ (73 aa)) is membrane-binding. Residues 1125–1263 (GDSWLKKFTE…SPGTGKSVAT (139 aa)) are oligomerization. The segment at 1146–1150 (SNKIS) is RNA-binding. The SF3 helicase domain occupies 1229–1385 (EHTINNYIQF…GEYSRDGKLN (157 aa)). An ATP-binding site is contributed by 1253–1260 (GSPGTGKS). Positions 1393, 1396, 1405, and 1410 each coordinate Zn(2+). Residues 1393-1410 (CKDCHQPANFKRCCPLVC) form a C4-type zinc finger. An RNA-binding region spans residues 1437–1444 (ERNRRSNI). Residues 1448–1453 (MEALFQ) form an oligomerization region. Residues 1518-1533 (AVTTFAAVAGVVYVMY) lie within the membrane without spanning it. The Cytoplasmic portion of the chain corresponds to 1534–2206 (KLFAGHQGAY…TLYRRWLDSF (673 aa)). Y1543 carries the O-(5'-phospho-RNA)-tyrosine modification. Residues 1563–1741 (GPGFDYAVAM…FAAALKRSYF (179 aa)) enclose the Peptidase C3 domain. Residues H1602, E1633, and C1709 each act as for protease 3C activity in the active site. The region spanning 1972 to 2087 (EKLFAFDYTG…SYPHEVDASL (116 aa)) is the RdRp catalytic domain. Residues D1978 and D2073 each contribute to the Mg(2+) site.

It belongs to the picornaviruses polyprotein family. Interacts with capsid protein VP1 and capsid protein VP3 to form heterotrimeric protomers. As to quaternary structure, interacts with capsid protein VP0, and capsid protein VP3 to form heterotrimeric protomers. Interacts with human PVR. Five protomers subsequently associate to form pentamers which serve as building blocks for the capsid. Interacts with capsid protein VP2, capsid protein VP3 and capsid protein VP4 following cleavage of capsid protein VP0. In terms of assembly, interacts with capsid protein VP1 and capsid protein VP3 in the mature capsid. Interacts with capsid protein VP0 and capsid protein VP1 to form heterotrimeric protomers. Five protomers subsequently associate to form pentamers which serve as building blocks for the capsid. Interacts with capsid protein VP4 in the mature capsid. Interacts with protein 2C; this interaction may be important for virion morphogenesis. As to quaternary structure, interacts with capsid protein VP1 and capsid protein VP3. In terms of assembly, homodimer. Homohexamer; forms a hexameric ring structure with 6-fold symmetry characteristic of AAA+ ATPases. Interacts (via N-terminus) with host RTN3 (via reticulon domain); this interaction is important for viral replication. Interacts with capsid protein VP3; this interaction may be important for virion morphogenesis. As to quaternary structure, interacts with protein 3CD. In terms of assembly, homodimer. Interacts with host GBF1. Interacts (via GOLD domain) with host ACBD3 (via GOLD domain); this interaction allows the formation of a viral protein 3A/ACBD3 heterotetramer with a 2:2 stoichiometry, which will stimulate the recruitment of host PI4KB in order to synthesize PI4P at the viral RNA replication sites. Interacts with RNA-directed RNA polymerase. As to quaternary structure, interacts with protein 3AB and with RNA-directed RNA polymerase. In terms of assembly, interacts with Viral protein genome-linked and with protein 3CD. It depends on Mg(2+) as a cofactor. Post-translationally, specific enzymatic cleavages in vivo by the viral proteases yield processing intermediates and the mature proteins. In terms of processing, myristoylation is required for the formation of pentamers during virus assembly. Further assembly of 12 pentamers and a molecule of genomic RNA generates the provirion. During virion maturation, immature virions are rendered infectious following cleavage of VP0 into VP4 and VP2. This maturation seems to be an autocatalytic event triggered by the presence of RNA in the capsid and it is followed by a conformational change infectious virion. Post-translationally, myristoylation is required during RNA encapsidation and formation of the mature virus particle. In terms of processing, VPg is uridylylated by the polymerase into VPg-pUpU. This acts as a nucleotide-peptide primer for the genomic RNA replication.

It is found in the virion. Its subcellular location is the host cytoplasm. The protein localises to the host cytoplasmic vesicle membrane. The protein resides in the host nucleus. The enzyme catalyses a ribonucleoside 5'-triphosphate + H2O = a ribonucleoside 5'-diphosphate + phosphate + H(+). The catalysed reaction is Selective cleavage of Tyr-|-Gly bond in the picornavirus polyprotein.. It catalyses the reaction RNA(n) + a ribonucleoside 5'-triphosphate = RNA(n+1) + diphosphate. It carries out the reaction Selective cleavage of Gln-|-Gly bond in the poliovirus polyprotein. In other picornavirus reactions Glu may be substituted for Gln, and Ser or Thr for Gly.. Replication or transcription is subject to high level of random mutations by the nucleotide analog ribavirin. Forms an icosahedral capsid of pseudo T=3 symmetry with capsid proteins VP2 and VP3. The capsid is 300 Angstroms in diameter, composed of 60 copies of each capsid protein and enclosing the viral positive strand RNA genome. Capsid protein VP1 mainly forms the vertices of the capsid. Capsid protein VP1 interacts with host cell receptor PVR to provide virion attachment to target host cells. This attachment induces virion internalization predominantly through clathrin- and caveolin-independent endocytosis in Hela cells and through caveolin-mediated endocytosis in brain microvascular endothelial cells. Tyrosine kinases are probably involved in the entry process. Virus binding to PVR induces increased junctional permeability and rearrangement of junctional proteins. Modulation of endothelial tight junctions, as well as cytolytic infection of endothelial cells themselves, may result in loss of endothelial integrity which may help the virus to reach the CNS. After binding to its receptor, the capsid undergoes conformational changes. Capsid protein VP1 N-terminus (that contains an amphipathic alpha-helix) and capsid protein VP4 are externalized. Together, they shape a pore in the host membrane through which viral genome is translocated to host cell cytoplasm. Its function is as follows. Forms an icosahedral capsid of pseudo T=3 symmetry with capsid proteins VP2 and VP3. The capsid is 300 Angstroms in diameter, composed of 60 copies of each capsid protein and enclosing the viral positive strand RNA genome. In terms of biological role, lies on the inner surface of the capsid shell. After binding to the host receptor, the capsid undergoes conformational changes. Capsid protein VP4 is released, Capsid protein VP1 N-terminus is externalized, and together, they shape a pore in the host membrane through which the viral genome is translocated into the host cell cytoplasm. Functionally, component of immature procapsids, which is cleaved into capsid proteins VP4 and VP2 after maturation. Allows the capsid to remain inactive before the maturation step. Cysteine protease that cleaves viral polyprotein and specific host proteins. It is responsible for the autocatalytic cleavage between the P1 and P2 regions, which is the first cleavage occurring in the polyprotein. Also cleaves the host translation initiation factor EIF4G1, in order to shut down the capped cellular mRNA translation. Inhibits the host nucleus-cytoplasm protein and RNA trafficking by cleaving host members of the nuclear pores including NUP98, NUP62 and NUP153. Counteracts stress granule formation probably by antagonizing its assembly or promoting its dissassembly. Cleaves and inhibits host IFIH1/MDA5, thereby inhibiting the type-I IFN production and the establishment of the antiviral state. Cleaves and inhibits host MAVS, thereby inhibiting the type-I IFN production and the establishment of the antiviral state. Its function is as follows. Plays an essential role in the virus replication cycle by acting as a viroporin. Creates a pore in the host endoplasmic reticulum and as a consequence releases Ca2+ in the cytoplasm of infected cell. In turn, high levels of cytoplasmic calcium may trigger membrane trafficking and transport of viral ER-associated proteins to viroplasms, sites of viral genome replication. In terms of biological role, induces and associates with structural rearrangements of intracellular membranes. Displays RNA-binding, nucleotide binding and NTPase activities. May play a role in virion morphogenesis and viral RNA encapsidation by interacting with the capsid protein VP3. Functionally, localizes the viral replication complex to the surface of membranous vesicles. Together with protein 3CD binds the Cis-Active RNA Element (CRE) which is involved in RNA synthesis initiation. Acts as a cofactor to stimulate the activity of 3D polymerase, maybe through a nucleid acid chaperone activity. Localizes the viral replication complex to the surface of membranous vesicles. It inhibits host cell endoplasmic reticulum-to-Golgi apparatus transport and causes the disassembly of the Golgi complex, possibly through GBF1 interaction. This would result in depletion of MHC, trail receptors and IFN receptors at the host cell surface. Plays an essential role in viral RNA replication by recruiting ACBD3 and PI4KB at the viral replication sites, thereby allowing the formation of the rearranged membranous structures where viral replication takes place. Its function is as follows. Acts as a primer for viral RNA replication and remains covalently bound to viral genomic RNA. VPg is uridylylated prior to priming replication into VPg-pUpU. The oriI viral genomic sequence may act as a template for this. The VPg-pUpU is then used as primer on the genomic RNA poly(A) by the RNA-dependent RNA polymerase to replicate the viral genome. During genome replication, the VPg-RNA linkage is removed by the host TDP2, thereby accelerating replication. During the late stage of the replication cycle, host TDP2 is excluded from sites of viral RNA synthesis and encapsidation, allowing for the generation of progeny virions. In terms of biological role, involved in the viral replication complex and viral polypeptide maturation. It exhibits protease activity with a specificity and catalytic efficiency that is different from protease 3C. Protein 3CD lacks polymerase activity. Protein 3CD binds to the 5'UTR of the viral genome. Functionally, major viral protease that mediates proteolytic processing of the polyprotein. Cleaves host EIF5B, contributing to host translation shutoff. Also cleaves host PABPC1, contributing to host translation shutoff. Cleaves host RIGI and thus contributes to the inhibition of type I interferon production. Cleaves host NLRP1, triggers host N-glycine-mediated degradation of the autoinhibitory NLRP1 N-terminal fragment. Inhibits the integrated stress response (ISR) in the infected cell by cleaving host G3BP1. Stress granule formation is thus inhibited, which allows protein synthesis and viral replication. Replicates the viral genomic RNA on the surface of intracellular membranes. May form linear arrays of subunits that propagate along a strong head-to-tail interaction called interface-I. Covalently attaches UMP to a tyrosine of VPg, which is used to prime RNA synthesis. The positive stranded RNA genome is first replicated at virus induced membranous vesicles, creating a dsRNA genomic replication form. This dsRNA is then used as template to synthesize positive stranded RNA genomes. ss(+)RNA genomes are either translated, replicated or encapsidated. This Poliovirus type 3 (strains P3/Leon/37 and P3/Leon 12A[1]B) protein is Genome polyprotein.